The chain runs to 500 residues: NF-kappa-B inhibitor epsilon (500 aa).

Residues 1-10 (MNQRRSESRP) are compositionally biased toward basic and acidic residues. 3 disordered regions span residues 1–66 (MNQR…PAWA), 84–215 (LSSL…YGSS), and 222–241 (SLLGGPEAEDPAPRLPLPHV). Residues Ser-157, Ser-161, and Ser-183 each carry the phosphoserine modification. Residues 161–186 (SLRSLRSLPESTSAPASGPSDGSPQP) show a composition bias toward low complexity. Over residues 196 to 209 (EPQEKEDADGERAD) the composition is skewed to basic and acidic residues. ANK repeat units follow at residues 258 to 291 (DGDTLVHLAVIHEAPAVLLCCLALLPQEVLDIQN), 293 to 322 (LYQTALHLAVHLDQPGAVRALVLKGASRAL), 326 to 355 (HGDTALHVACQRQHLACARCLLEGRPEPGR), 369 to 398 (QGLACLHIATLQKNQPLMELLLRNGADIDV), 403 to 432 (SGKTALHLAVETQERGLVQFLLQAGAQVDA), and 436 to 465 (NGCTPLHLAAGRGLMGISSTLCKAGADSLL).

Belongs to the NF-kappa-B inhibitor family. As to quaternary structure, interacts with RELA, REL, NFKB1 nuclear factor NF-kappa-B p50 subunit and NFKB2 nuclear factor NF-kappa-B p52 subunit. Interacts with HNRNPA2B1; the interaction may be mediated by the RRM2 domain of HNRNPA2B1, and HNRNPA2B1 may interact simultaneously with FAM76B and either NFKBIA or NFKBIE to form a complex. Serine phosphorylated; followed by proteasome-dependent degradation. Highly expressed in spleen, testis and lung, followed by kidney, pancreas, heart, placenta and brain. Also expressed in granulocytes and macrophages.

It localises to the cytoplasm. In terms of biological role, sequesters NF-kappa-B transcription factor complexes in the cytoplasm, thereby inhibiting their activity. Sequestered complexes include NFKB1-RELA (p50-p65) and NFKB1-REL (p50-c-Rel) complexes. Limits B-cell activation in response to pathogens, and also plays an important role in B-cell development. This Homo sapiens (Human) protein is NF-kappa-B inhibitor epsilon (NFKBIE).